Here is a 1549-residue protein sequence, read N- to C-terminus: FERM and PDZ domain-containing protein 1 (1549 aa).

The 79-residue stretch at 57–135 (TVTLDKDVLL…ALSITVVRCT (79 aa)) folds into the PDZ domain. Residues 181 to 496 (NVLKVYLENG…GYYRLFVDPA (316 aa)) enclose the FERM domain. 7 disordered regions span residues 554 to 618 (AREE…DDLD), 717 to 738 (SHLS…PPQW), 775 to 834 (YDAA…YAKS), 913 to 1046 (STNP…RSEI), 1097 to 1174 (SLDS…EAQE), 1231 to 1257 (LSPC…DDSP), and 1321 to 1347 (PETE…AGSQ). The span at 717-730 (SHLSDSGSESTASR) shows a compositional bias: polar residues. Residues 924 to 931 (EPETMETK) form an important for interaction with GPSM2 region. Positions 950 to 961 (PSNTENPVTTDG) are enriched in polar residues. Low complexity predominate over residues 962–980 (SSASIPHSPHHSNPGSSSP). A compositionally biased stretch (basic and acidic residues) spans 1117 to 1130 (SGKDLGDSKGDRLD).

Interacts with GPSM1. Interacts with GPSM2.

It is found in the cytoplasm. Its subcellular location is the cytosol. It localises to the cell membrane. In terms of biological role, stabilizes membrane-bound GPSM1, and thereby promotes its interaction with GNAI1. The polypeptide is FERM and PDZ domain-containing protein 1 (Frmpd1) (Mus musculus (Mouse)).